Consider the following 580-residue polypeptide: Protein O-linked-mannose beta-1,4-N-acetylglucosaminyltransferase 2 (580 aa).

Topologically, residues 1–4 are cytoplasmic; the sequence is MHLS. The chain crosses the membrane as a helical; Signal-anchor for type II membrane protein span at residues 5–25; the sequence is AVFNALLVSVLAAVLWKHVRL. Topologically, residues 26–580 are lumenal; it reads REHAATLEEE…PFADVLVCNT (555 aa). N-linked (GlcNAc...) asparagine glycosylation is found at Asn99 and Asn276. The region spanning 488–580 is the Fibronectin type-III domain; that stretch reads ARCQASVHGA…PFADVLVCNT (93 aa).

It belongs to the glycosyltransferase 61 family. In terms of tissue distribution, highly expressed in the brain, muscle, heart, and kidney in both fetus and adult. In the brain, highest expression in the cortex and cerebellum. Highly expressed in the pancreas.

The protein resides in the endoplasmic reticulum membrane. The catalysed reaction is 3-O-(alpha-D-mannosyl)-L-threonyl-[protein] + UDP-N-acetyl-alpha-D-glucosamine = 3-O-(N-acetyl-beta-D-glucosaminyl-(1-&gt;4)-alpha-D-mannosyl)-L-threonyl-[protein] + UDP + H(+). It participates in protein modification; protein glycosylation. In terms of biological role, O-linked mannose beta-1,4-N-acetylglucosaminyltransferase that transfers UDP-N-acetyl-D-glucosamine to the 4-position of the mannose to generate N-acetyl-D-glucosamine-beta-1,4-O-D-mannosylprotein. Involved in the biosynthesis of the phosphorylated O-mannosyl trisaccharide (N-acetylgalactosamine-beta-3-N-acetylglucosamine-beta-4-(phosphate-6-)mannose), a carbohydrate structure present in alpha-dystroglycan (DAG1), which is required for binding laminin G-like domain-containing extracellular proteins with high affinity. This is Protein O-linked-mannose beta-1,4-N-acetylglucosaminyltransferase 2 (POMGNT2) from Homo sapiens (Human).